We begin with the raw amino-acid sequence, 94 residues long: Aspartyl/glutamyl-tRNA(Asn/Gln) amidotransferase subunit C (94 aa).

The protein belongs to the GatC family. As to quaternary structure, heterotrimer of A, B and C subunits.

The enzyme catalyses L-glutamyl-tRNA(Gln) + L-glutamine + ATP + H2O = L-glutaminyl-tRNA(Gln) + L-glutamate + ADP + phosphate + H(+). It carries out the reaction L-aspartyl-tRNA(Asn) + L-glutamine + ATP + H2O = L-asparaginyl-tRNA(Asn) + L-glutamate + ADP + phosphate + 2 H(+). Allows the formation of correctly charged Asn-tRNA(Asn) or Gln-tRNA(Gln) through the transamidation of misacylated Asp-tRNA(Asn) or Glu-tRNA(Gln) in organisms which lack either or both of asparaginyl-tRNA or glutaminyl-tRNA synthetases. The reaction takes place in the presence of glutamine and ATP through an activated phospho-Asp-tRNA(Asn) or phospho-Glu-tRNA(Gln). The protein is Aspartyl/glutamyl-tRNA(Asn/Gln) amidotransferase subunit C of Nitratidesulfovibrio vulgaris (strain ATCC 29579 / DSM 644 / CCUG 34227 / NCIMB 8303 / VKM B-1760 / Hildenborough) (Desulfovibrio vulgaris).